A 349-amino-acid chain; its full sequence is Holliday junction branch migration complex subunit RuvB (349 aa).

Positions 1 to 181 (MDDRILTSVN…FGVLCPMEFY (181 aa)) are large ATPase domain (RuvB-L). Residues Leu20, Arg21, Gly62, Lys65, Thr66, Thr67, 128–130 (EDY), Arg171, Tyr181, and Arg218 each bind ATP. Thr66 lines the Mg(2+) pocket. Residues 182–252 (NDEELKEIIV…SAKKALNLLE (71 aa)) are small ATPAse domain (RuvB-S). The segment at 255–349 (DEGFDSIDNK…DQCSFFKKEK (95 aa)) is head domain (RuvB-H). Residues Arg310 and Arg315 each contribute to the DNA site.

The protein belongs to the RuvB family. In terms of assembly, homohexamer. Forms an RuvA(8)-RuvB(12)-Holliday junction (HJ) complex. HJ DNA is sandwiched between 2 RuvA tetramers; dsDNA enters through RuvA and exits via RuvB. An RuvB hexamer assembles on each DNA strand where it exits the tetramer. Each RuvB hexamer is contacted by two RuvA subunits (via domain III) on 2 adjacent RuvB subunits; this complex drives branch migration. In the full resolvosome a probable DNA-RuvA(4)-RuvB(12)-RuvC(2) complex forms which resolves the HJ.

The protein resides in the cytoplasm. It carries out the reaction ATP + H2O = ADP + phosphate + H(+). In terms of biological role, the RuvA-RuvB-RuvC complex processes Holliday junction (HJ) DNA during genetic recombination and DNA repair, while the RuvA-RuvB complex plays an important role in the rescue of blocked DNA replication forks via replication fork reversal (RFR). RuvA specifically binds to HJ cruciform DNA, conferring on it an open structure. The RuvB hexamer acts as an ATP-dependent pump, pulling dsDNA into and through the RuvAB complex. RuvB forms 2 homohexamers on either side of HJ DNA bound by 1 or 2 RuvA tetramers; 4 subunits per hexamer contact DNA at a time. Coordinated motions by a converter formed by DNA-disengaged RuvB subunits stimulates ATP hydrolysis and nucleotide exchange. Immobilization of the converter enables RuvB to convert the ATP-contained energy into a lever motion, pulling 2 nucleotides of DNA out of the RuvA tetramer per ATP hydrolyzed, thus driving DNA branch migration. The RuvB motors rotate together with the DNA substrate, which together with the progressing nucleotide cycle form the mechanistic basis for DNA recombination by continuous HJ branch migration. Branch migration allows RuvC to scan DNA until it finds its consensus sequence, where it cleaves and resolves cruciform DNA. The polypeptide is Holliday junction branch migration complex subunit RuvB (Clostridium acetobutylicum (strain ATCC 824 / DSM 792 / JCM 1419 / IAM 19013 / LMG 5710 / NBRC 13948 / NRRL B-527 / VKM B-1787 / 2291 / W)).